The chain runs to 591 residues: L-fucose isomerase (591 aa).

Residues E337 and D361 each act as proton acceptor in the active site. 3 residues coordinate Mn(2+): E337, D361, and H528.

It belongs to the L-fucose isomerase family. Homohexamer. The cofactor is Mn(2+).

It is found in the cytoplasm. The enzyme catalyses L-fucose = L-fuculose. The protein operates within carbohydrate degradation; L-fucose degradation; L-lactaldehyde and glycerone phosphate from L-fucose: step 1/3. In terms of biological role, converts the aldose L-fucose into the corresponding ketose L-fuculose. The protein is L-fucose isomerase of Salmonella paratyphi A (strain ATCC 9150 / SARB42).